We begin with the raw amino-acid sequence, 406 residues long: Putative F-box protein At5g38270 (406 aa).

Residues 20 to 67 (HDWSKLCPDILRSILESLSSTDFHRAKTVCSDWYSNWKTCVKPLCPWR) enclose the F-box domain.

The protein is Putative F-box protein At5g38270 of Arabidopsis thaliana (Mouse-ear cress).